The following is a 405-amino-acid chain: Accessory Sec system protein translocase subunit SecY2 (405 aa).

10 helical membrane passes run 14–34, 65–85, 104–124, 131–151, 156–176, 190–210, 243–263, 285–305, 343–363, and 368–388; these read MCTLFLLFIYVLGSRIALPFV, LFSIGLSPWMSAMILWQMFSF, MYLTLGIALIQALALTTNLPV, FLVFLLNTSLLVAGTFFLVWL, ATIGVGGPVVILLASMVASLP, LGLLFLLLVLGVLFTYLVVLF, GMPYMYVMSLMGLPSYLLLLL, PLWIYAYILILFVFSIAFAFV, FALIGAVFNVTLAGVPILFVL, and LLKVSMIPGLFLILSGMLFTI.

Belongs to the SecY/SEC61-alpha family. SecY2 subfamily. In terms of assembly, component of the accessory SecA2/SecY2 protein translocase complex required to export cell wall proteins. May form heterotrimers with SecE and SecG subunits.

It is found in the cell membrane. In terms of biological role, part of the accessory SecA2/SecY2 system specifically required for export of possible cell wall proteins. The central subunit of a protein translocation channel. The protein is Accessory Sec system protein translocase subunit SecY2 of Streptococcus oralis (strain Uo5).